The primary structure comprises 110 residues: ATP-dependent Clp protease adapter protein ClpS (110 aa).

Belongs to the ClpS family. In terms of assembly, binds to the N-terminal domain of the chaperone ClpA.

Functionally, involved in the modulation of the specificity of the ClpAP-mediated ATP-dependent protein degradation. This Bartonella henselae (strain ATCC 49882 / DSM 28221 / CCUG 30454 / Houston 1) (Rochalimaea henselae) protein is ATP-dependent Clp protease adapter protein ClpS.